The following is a 180-amino-acid chain: ATP-dependent protease subunit HslV (180 aa).

T2 is an active-site residue. Na(+)-binding residues include G157, C160, and S163.

Belongs to the peptidase T1B family. HslV subfamily. As to quaternary structure, a double ring-shaped homohexamer of HslV is capped on each side by a ring-shaped HslU homohexamer. The assembly of the HslU/HslV complex is dependent on binding of ATP.

Its subcellular location is the cytoplasm. The enzyme catalyses ATP-dependent cleavage of peptide bonds with broad specificity.. With respect to regulation, allosterically activated by HslU binding. Its function is as follows. Protease subunit of a proteasome-like degradation complex believed to be a general protein degrading machinery. The polypeptide is ATP-dependent protease subunit HslV (Wigglesworthia glossinidia brevipalpis).